Here is a 181-residue protein sequence, read N- to C-terminus: Small ribosomal subunit protein bS16 (181 aa).

The disordered stretch occupies residues 150-181 (KKAAEEAAKAAAEAPAEEAAPAEEAATEAAAE). The span at 158-181 (KAAAEAPAEEAAPAEEAATEAAAE) shows a compositional bias: low complexity.

The protein belongs to the bacterial ribosomal protein bS16 family.

The chain is Small ribosomal subunit protein bS16 from Bacteroides fragilis (strain ATCC 25285 / DSM 2151 / CCUG 4856 / JCM 11019 / LMG 10263 / NCTC 9343 / Onslow / VPI 2553 / EN-2).